The sequence spans 184 residues: Intraflagellar transport protein 22 homolog (184 aa).

GTP contacts are provided by residues 10–17 (GPTESGKT), 62–66 (DCGGD), and 122–125 (KKPG).

Belongs to the small GTPase superfamily. Rab family.

This Xenopus tropicalis (Western clawed frog) protein is Intraflagellar transport protein 22 homolog (ift22).